Consider the following 101-residue polypeptide: Large ribosomal subunit protein eL21 (101 aa).

A compositionally biased stretch (basic residues) spans 1-18 (MVKHSRGYRTRSRSLLRK). The tract at residues 1-23 (MVKHSRGYRTRSRSLLRKSPRER) is disordered.

This sequence belongs to the eukaryotic ribosomal protein eL21 family.

The polypeptide is Large ribosomal subunit protein eL21 (Saccharolobus islandicus (strain Y.G.57.14 / Yellowstone #1) (Sulfolobus islandicus)).